Here is an 829-residue protein sequence, read N- to C-terminus: Protein SEY1 (829 aa).

The Cytoplasmic portion of the chain corresponds to 1 to 721 (MNQTPQIAQD…KRSMVSSVAQ (721 aa)). Residues 87 to 310 (GFAYDVVAVF…REDYVFQPAY (224 aa)) form the GB1/RHD3-type G domain. 97-104 (GSQSTGKS) contributes to the GTP binding site. A coiled-coil region spans residues 487–525 (EYEHELALLDEDLKLIADKCRADETKKMVNAIERNVKRQ). Residues 722-742 (IPVWMYGVLVVLGWNEAMAVL) traverse the membrane as a helical segment. Residues 743 to 745 (FNP) are Lumenal-facing. A helical transmembrane segment spans residues 746–766 (LYFAMLLVLAASGYIILQLGL). Residues 767 to 829 (AGPILQIAST…DLIKGEMLEK (63 aa)) lie on the Cytoplasmic side of the membrane. The interval 806-829 (PVTASSSDEQERKGDLIKGEMLEK) is disordered. Positions 814–829 (EQERKGDLIKGEMLEK) are enriched in basic and acidic residues.

Belongs to the TRAFAC class dynamin-like GTPase superfamily. GB1/RHD3 GTPase family. RHD3 subfamily.

It localises to the endoplasmic reticulum membrane. Its function is as follows. Cooperates with the reticulon proteins and tubule-shaping DP1 family proteins to generate and maintain the structure of the tubular endoplasmic reticulum network. Has GTPase activity, which is required for its function in ER organization. The sequence is that of Protein SEY1 from Cryptococcus neoformans var. neoformans serotype D (strain B-3501A) (Filobasidiella neoformans).